Consider the following 92-residue polypeptide: Signal recognition particle 19 kDa protein (92 aa).

The protein belongs to the SRP19 family. Part of the signal recognition particle protein translocation system, which is composed of SRP and FtsY. Archaeal SRP consists of a 7S RNA molecule of 300 nucleotides and two protein subunits: SRP54 and SRP19.

The protein localises to the cytoplasm. Involved in targeting and insertion of nascent membrane proteins into the cytoplasmic membrane. Binds directly to 7S RNA and mediates binding of the 54 kDa subunit of the SRP. This Methanosphaera stadtmanae (strain ATCC 43021 / DSM 3091 / JCM 11832 / MCB-3) protein is Signal recognition particle 19 kDa protein.